The following is a 442-amino-acid chain: Gamma-glutamyl phosphate reductase (442 aa).

This sequence belongs to the gamma-glutamyl phosphate reductase family.

The protein localises to the cytoplasm. The enzyme catalyses L-glutamate 5-semialdehyde + phosphate + NADP(+) = L-glutamyl 5-phosphate + NADPH + H(+). It participates in amino-acid biosynthesis; L-proline biosynthesis; L-glutamate 5-semialdehyde from L-glutamate: step 2/2. Functionally, catalyzes the NADPH-dependent reduction of L-glutamate 5-phosphate into L-glutamate 5-semialdehyde and phosphate. The product spontaneously undergoes cyclization to form 1-pyrroline-5-carboxylate. This Campylobacter curvus (strain 525.92) protein is Gamma-glutamyl phosphate reductase.